A 99-amino-acid chain; its full sequence is Large ribosomal subunit protein uL23 (99 aa).

This sequence belongs to the universal ribosomal protein uL23 family. As to quaternary structure, part of the 50S ribosomal subunit. Contacts protein L29, and trigger factor when it is bound to the ribosome.

One of the early assembly proteins it binds 23S rRNA. One of the proteins that surrounds the polypeptide exit tunnel on the outside of the ribosome. Forms the main docking site for trigger factor binding to the ribosome. The protein is Large ribosomal subunit protein uL23 of Lachnoclostridium phytofermentans (strain ATCC 700394 / DSM 18823 / ISDg) (Clostridium phytofermentans).